The following is a 298-amino-acid chain: Sulfofructose kinase (298 aa).

6-deoxy-6-sulfo-D-fructose is bound by residues Asp-13, Lys-27, Gly-39, Ser-95, and Arg-138. ATP is bound by residues Thr-212, Gly-214, Gly-217, and Gly-243. Asp-244 lines the 6-deoxy-6-sulfo-D-fructose pocket.

This sequence belongs to the carbohydrate kinase PfkB family. In terms of assembly, homodimer.

It catalyses the reaction 6-deoxy-6-sulfo-D-fructose + ATP = 6-deoxy-6-sulfo-D-fructose 1-phosphate + ADP + H(+). Strongly inhibited by ADP. Activated by sulfoquinovose (SQ), sulfolactaldehyde (SLA) and dihydroxyacetone phosphate (DHAP) (through effects on KM) and by fructose 6-phosphate (F6P), fructose bisphosphate (FBP), phosphoenolpyruvate (PEP) and citrate (through effects on kcat/KM). In terms of biological role, phosphorylates 6-deoxy-6-sulfo-D-fructose (SF) to 6-deoxy-6-sulfo-D-fructose 1-phosphate (SFP). Cannot phosphorylate fructose 6-phosphate. This Escherichia coli (strain K12) protein is Sulfofructose kinase (yihV).